Consider the following 722-residue polypeptide: Polyribonucleotide nucleotidyltransferase (722 aa).

Mg(2+)-binding residues include aspartate 498 and aspartate 504. One can recognise a KH domain in the interval 565–624 (PQFHTMKIDPDKIRDIIGKGGATIRSITEETGASIDIDDNGTIKIYADDGDGMQAAIARI). Residues 634 to 702 (GAVYQGKVVR…QRGRIKLSIK (69 aa)) enclose the S1 motif domain.

This sequence belongs to the polyribonucleotide nucleotidyltransferase family. As to quaternary structure, component of the RNA degradosome, which is a multiprotein complex involved in RNA processing and mRNA degradation. Mg(2+) is required as a cofactor.

The protein resides in the cytoplasm. The enzyme catalyses RNA(n+1) + phosphate = RNA(n) + a ribonucleoside 5'-diphosphate. Involved in mRNA degradation. Catalyzes the phosphorolysis of single-stranded polyribonucleotides processively in the 3'- to 5'-direction. This chain is Polyribonucleotide nucleotidyltransferase, found in Saccharophagus degradans (strain 2-40 / ATCC 43961 / DSM 17024).